Reading from the N-terminus, the 2027-residue chain is Citron Rho-interacting kinase (2027 aa).

Met1 is modified (N-acetylmethionine). The Protein kinase domain maps to 97–360 (FEVRSLVGCG…FEGLCCHPFF (264 aa)). Residues 103–111 (VGCGHFAEV) and Lys126 contribute to the ATP site. The Proton acceptor role is filled by Asp221. The region spanning 361 to 431 (SKIDWNNIRN…SKALGILGRS (71 aa)) is the AGC-kinase C-terminal domain. Phosphoserine is present on residues Ser433, Ser440, Ser480, and Ser582. Positions 453–1297 (IKSKELQDSQ…SAREEAAHRK (845 aa)) form a coiled coil. The interaction with Rho/Rac stretch occupies residues 1091 to 1302 (LAVKEHKAEI…AAHRKATDHP (212 aa)). Tyr1196 bears the Phosphotyrosine mark. Positions 1290 to 1303 (REEAAHRKATDHPH) are enriched in basic and acidic residues. Disordered regions lie at residues 1290-1310 (REEA…PATA) and 1322-1351 (SPEH…EFSR). Residues 1327 to 1337 (PSAMSLLAPPS) are compositionally biased toward low complexity. Basic and acidic residues predominate over residues 1339 to 1351 (RRKESSTPEEFSR). Residues 1362–1411 (PHRFNVGLNMRATKCAVCLDTVHFGRQASKCLECQVMCHPKCSTCLPATC) form a Phorbol-ester/DAG-type zinc finger. The 121-residue stretch at 1443–1563 (SLHLEGWMKV…WVTALESVVA (121 aa)) folds into the PH domain. One can recognise a CNH domain in the interval 1591–1881 (RLDMNCTLPF…RYLGPAISSG (291 aa)). Lys1721 is subject to N6-acetyllysine. The interval 1905-2012 (ESGTEHHRGP…RGRLPAGAVR (108 aa)) is disordered. At Ser1940 the chain carries Phosphoserine. Over residues 1948–2003 (SHPREPSTPHRYREGRTELRRDKSPGRPLEREKSPGRMLSTRRERSPGRLFEDSSR) the composition is skewed to basic and acidic residues. Residues 1953–1958 (PSTPHR) carry the SH3-binding motif. The residue at position 1993 (Ser1993) is a Phosphoserine. Residue Thr2013 is modified to Phosphothreonine.

It belongs to the protein kinase superfamily. AGC Ser/Thr protein kinase family. In terms of assembly, directly interacts with KIF14 depending on the activation state (stronger interaction with the kinase-dead form). Homodimer. Interacts with TTC3.

The protein resides in the cytoplasm. The catalysed reaction is L-seryl-[protein] + ATP = O-phospho-L-seryl-[protein] + ADP + H(+). It carries out the reaction L-threonyl-[protein] + ATP = O-phospho-L-threonyl-[protein] + ADP + H(+). Functionally, plays a role in cytokinesis. Required for KIF14 localization to the central spindle and midbody. Putative RHO/RAC effector that binds to the GTP-bound forms of RHO and RAC1. It probably binds p21 with a tighter specificity in vivo. Displays serine/threonine protein kinase activity. Plays an important role in the regulation of cytokinesis and the development of the central nervous system. Phosphorylates MYL9/MLC2. The protein is Citron Rho-interacting kinase (CIT) of Homo sapiens (Human).